The primary structure comprises 428 residues: uncharacterized protein (428 aa).

12 helical membrane passes run 14 to 34 (LYDWANSAYSIVVTTAVFPLF), 55 to 75 (YTIAISTFILAMLGPILGTIA), 84 to 104 (FFGFFVSAGVASTAMLAFIPS), 107 to 127 (WLLLLLFYTVSAIGFSGANVF), 149 to 169 (FGLGYIGSTIPFIISIAVILL), 182 to 202 (ASQLSFFITAAWWGLFTIPMI), 238 to 258 (LFLFLLAYFFYIDGVGTIITM), 272 to 292 (SLLIILFVTQVVAAPFSIIYG), 302 to 322 (TMLYVGIVIYMIVCVYAYFME), 324 to 344 (TLDFWILAMLVATSQGGIQAL), 361 to 381 (FFGFYNIFGKFASIMGPLLIA), and 392 to 412 (TAVFSLIILFVIGIVILAFVP).

The protein belongs to the major facilitator superfamily.

It localises to the cell membrane. This is an uncharacterized protein from Bacillus subtilis (strain 168).